Here is a 295-residue protein sequence, read N- to C-terminus: Small ribosomal subunit protein uS2 (295 aa).

The residue at position 2 (S2) is an N-acetylserine. The residue at position 43 (S43) is a Phosphoserine. K52 bears the N6-acetyllysine mark. The segment at 54–113 is interaction with PPP1R16B; sequence TWEKLLLAARAIVAIENPADVSVISSRNTGQRAVLKFAAATGATPIAGRFTPGTFTNQIQ. At K89 the chain carries N6-acetyllysine; alternate. Residue K89 forms a Glycyl lysine isopeptide (Lys-Gly) (interchain with G-Cter in SUMO2); alternate linkage. T97 carries the post-translational modification Phosphothreonine. 2 laminin-binding regions span residues 161–180 and 205–229; these read IPCN…MLAR and RDPE…EFQG. 5 [DE]-W-[ST] repeats span residues 230 to 232, 247 to 249, 266 to 268, 275 to 277, and 293 to 295; these read EWT, DWS, and EWS. Positions 242–295 are laminin-binding; sequence QPEVADWSEGVQVPSVPIQQFPTEDWSAQPSTEDWSAAPTAQATEWVGTTTEWS. The disordered stretch occupies residues 266–295; that stretch reads DWSAQPSTEDWSAAPTAQATEWVGTTTEWS.

It belongs to the universal ribosomal protein uS2 family. Monomer (37LRP) and homodimer (67LR). Component of the small ribosomal subunit. Mature ribosomes consist of a small (40S) and a large (60S) subunit. The 40S subunit contains about 33 different proteins and 1 molecule of RNA (18S). The 60S subunit contains about 49 different proteins and 3 molecules of RNA (28S, 5.8S and 5S). Interacts with RPS21. Interacts with several laminins including at least LAMB1. Interacts with MDK. The mature dimeric form interacts with PPP1R16B (via its fourth ankyrin repeat). Interacts with PPP1CA only in the presence of PPP1R16B. Post-translationally, acylated. Acylation may be a prerequisite for conversion of the monomeric 37 kDa laminin receptor precursor (37LRP) to the mature dimeric 67 kDa laminin receptor (67LR), and may provide a mechanism for membrane association. In terms of processing, cleaved by stromelysin-3 (ST3) at the cell surface. Cleavage by stromelysin-3 may be a mechanism to alter cell-extracellular matrix interactions.

The protein resides in the cell membrane. It is found in the cytoplasm. Its subcellular location is the nucleus. Functionally, required for the assembly and/or stability of the 40S ribosomal subunit. Required for the processing of the 20S rRNA-precursor to mature 18S rRNA in a late step of the maturation of 40S ribosomal subunits. Also functions as a cell surface receptor for laminin. Plays a role in cell adhesion to the basement membrane and in the consequent activation of signaling transduction pathways. May play a role in cell fate determination and tissue morphogenesis. Also acts as a receptor for several other ligands, including the pathogenic prion protein, viruses, and bacteria. Acts as a PPP1R16B-dependent substrate of PPP1CA. The chain is Small ribosomal subunit protein uS2 from Bos taurus (Bovine).